An 817-amino-acid polypeptide reads, in one-letter code: Putative ATP-dependent RNA helicase R350 (817 aa).

The tract at residues 1–29 (MNRRNRSNDLNPEPSIENPNNQIAEEFPG) is disordered. The segment covering 17–29 (ENPNNQIAEEFPG) has biased composition (polar residues). The Helicase ATP-binding domain occupies 93–271 (LNPQGPYTSI…ALMFNLLRPG (179 aa)). 106–113 (HGLGSGKT) contributes to the ATP binding site. A DEAH box motif is present at residues 206–209 (DEAH). Positions 495–661 (LAIAFMTYIS…STDEYVEDQA (167 aa)) constitute a Helicase C-terminal domain.

Belongs to the DEAD box helicase family. DEAH subfamily.

It is found in the virion. The catalysed reaction is ATP + H2O = ADP + phosphate + H(+). The protein is Putative ATP-dependent RNA helicase R350 of Acanthamoeba polyphaga mimivirus (APMV).